Here is a 206-residue protein sequence, read N- to C-terminus: Two-component response regulator ARR15 (206 aa).

A Response regulatory domain is found at 19–146; the sequence is HVLAVDDSFV…DVKRLKELIM (128 aa). A 4-aspartylphosphate modification is found at aspartate 79. The segment at 151–206 is disordered; that stretch reads AEEGKTKKLSPKRILQNDIDSSPSSSSTSSSSSSHDVSSLDDDTPSSKRIKLESRG. Residues 168 to 187 show a composition bias toward low complexity; that stretch reads DIDSSPSSSSTSSSSSSHDV.

This sequence belongs to the ARR family. Type-A subfamily. Post-translationally, two-component system major event consists of a His-to-Asp phosphorelay between a sensor histidine kinase (HK) and a response regulator (RR). In plants, the His-to-Asp phosphorelay involves an additional intermediate named Histidine-containing phosphotransfer protein (HPt). This multistep phosphorelay consists of a His-Asp-His-Asp sequential transfer of a phosphate group between first a His and an Asp of the HK protein, followed by the transfer to a conserved His of the HPt protein and finally the transfer to an Asp in the receiver domain of the RR protein.

Its subcellular location is the nucleus. In terms of biological role, functions as a response regulator involved in His-to-Asp phosphorelay signal transduction system. Phosphorylation of the Asp residue in the receiver domain activates the ability of the protein to promote the transcription of target genes. Type-A response regulators seem to act as negative regulators of the cytokinin signaling. This chain is Two-component response regulator ARR15 (ARR15), found in Arabidopsis thaliana (Mouse-ear cress).